The following is a 690-amino-acid chain: Methionine--tRNA ligase (690 aa).

Positions 12–22 (PYANGPLHLGH) match the 'HIGH' region motif. Zn(2+) contacts are provided by cysteine 144, cysteine 147, cysteine 157, and cysteine 160. The short motif at 333 to 337 (QFSKS) is the 'KMSKS' region element. Lysine 336 is an ATP binding site. Positions 535–632 (KKINIDLMVG…VNADDGSRMK (98 aa)) constitute a tRNA-binding domain.

The protein belongs to the class-I aminoacyl-tRNA synthetase family. MetG type 1 subfamily. Homodimer. Zn(2+) is required as a cofactor.

It localises to the cytoplasm. It catalyses the reaction tRNA(Met) + L-methionine + ATP = L-methionyl-tRNA(Met) + AMP + diphosphate. In terms of biological role, is required not only for elongation of protein synthesis but also for the initiation of all mRNA translation through initiator tRNA(fMet) aminoacylation. This chain is Methionine--tRNA ligase, found in Picrophilus torridus (strain ATCC 700027 / DSM 9790 / JCM 10055 / NBRC 100828 / KAW 2/3).